We begin with the raw amino-acid sequence, 333 residues long: Foldase protein PrsA (333 aa).

Residues 1-22 (MKKSTKLLAGIVTLASAMTLAA) form the signal peptide. A lipid anchor (N-palmitoyl cysteine) is attached at Cys23. Cys23 carries the S-diacylglycerol cysteine lipid modification. Positions 145 to 240 (TPEMTTQVTT…NKFYIVKVTK (96 aa)) constitute a PpiC domain. The segment at 301–333 (DKKASKANTSKSDQKSSSDSSKDSQSSKSKSEK) is disordered. Over residues 312–322 (SDQKSSSDSSK) the composition is skewed to basic and acidic residues. Over residues 323–333 (DSQSSKSKSEK) the composition is skewed to low complexity.

The protein belongs to the PrsA family.

The protein localises to the cell membrane. It carries out the reaction [protein]-peptidylproline (omega=180) = [protein]-peptidylproline (omega=0). In terms of biological role, plays a major role in protein secretion by helping the post-translocational extracellular folding of several secreted proteins. The polypeptide is Foldase protein PrsA (Streptococcus equi subsp. equi (strain 4047)).